The chain runs to 214 residues: Orotate phosphoribosyltransferase (214 aa).

Residue K26 participates in 5-phospho-alpha-D-ribose 1-diphosphate binding. Position 34 to 35 (34 to 35 (FF)) interacts with orotate. 5-phospho-alpha-D-ribose 1-diphosphate is bound by residues 72-73 (YK), R98, K99, K102, H104, and 123-131 (DDVISAGTS). The orotate site is built by S127 and R155.

Belongs to the purine/pyrimidine phosphoribosyltransferase family. PyrE subfamily. In terms of assembly, homodimer. Mg(2+) serves as cofactor.

The enzyme catalyses orotidine 5'-phosphate + diphosphate = orotate + 5-phospho-alpha-D-ribose 1-diphosphate. The protein operates within pyrimidine metabolism; UMP biosynthesis via de novo pathway; UMP from orotate: step 1/2. Functionally, catalyzes the transfer of a ribosyl phosphate group from 5-phosphoribose 1-diphosphate to orotate, leading to the formation of orotidine monophosphate (OMP). The sequence is that of Orotate phosphoribosyltransferase from Chromobacterium violaceum (strain ATCC 12472 / DSM 30191 / JCM 1249 / CCUG 213 / NBRC 12614 / NCIMB 9131 / NCTC 9757 / MK).